We begin with the raw amino-acid sequence, 113 residues long: UPF0342 protein MGAS10750_Spy0713 (113 aa).

The protein belongs to the UPF0342 family.

This chain is UPF0342 protein MGAS10750_Spy0713, found in Streptococcus pyogenes serotype M4 (strain MGAS10750).